A 64-amino-acid polypeptide reads, in one-letter code: Large ribosomal subunit protein bL32 (64 aa).

Positions 1-36 (MAVQKSRVTPSRRGQRRSHDALSAKQLSTDPTTGEV) are disordered.

This sequence belongs to the bacterial ribosomal protein bL32 family.

The polypeptide is Large ribosomal subunit protein bL32 (Stenotrophomonas maltophilia (strain K279a)).